A 502-amino-acid chain; its full sequence is Mannitol 2-dehydrogenase (502 aa).

37–48 lines the NAD(+) pocket; sequence IVHIGVGGFHRA.

Belongs to the mannitol dehydrogenase family. In terms of assembly, monomer.

The enzyme catalyses D-mannitol + NAD(+) = D-fructose + NADH + H(+). Catalyzes the NAD(H)-dependent interconversion of D-fructose and D-mannitol in the mannitol metabolic pathway. This chain is Mannitol 2-dehydrogenase, found in Neosartorya fischeri (strain ATCC 1020 / DSM 3700 / CBS 544.65 / FGSC A1164 / JCM 1740 / NRRL 181 / WB 181) (Aspergillus fischerianus).